Here is a 155-residue protein sequence, read N- to C-terminus: MLP-like protein 423 (155 aa).

This sequence belongs to the MLP family.

The chain is MLP-like protein 423 (MLP423) from Arabidopsis thaliana (Mouse-ear cress).